Reading from the N-terminus, the 1235-residue chain is Phosphorylase b kinase regulatory subunit alpha, liver isoform (1235 aa).

A phosphoserine mark is found at serine 697, serine 731, and serine 737. A calmodulin-binding region spans residues 808–838; that stretch reads LSELYGKAGLNQEWGLIRYISGLLRKKVEVL. Low complexity predominate over residues 976–986; it reads SSASSPAISIH. The segment at 976–1002 is disordered; that stretch reads SSASSPAISIHEVGHTGVTKTERSGIN. Serine 984, serine 1016, and serine 1044 each carry phosphoserine. The segment covering 1032–1053 has biased composition (low complexity); it reads AYSKSVRSSTPSSPTGTSSSDS. Positions 1032-1060 are disordered; sequence AYSKSVRSSTPSSPTGTSSSDSGGHHISW. Positions 1059–1099 are calmodulin-binding; sequence SWGERQGQWLRRRRLDGAINRVPVGFYQRVWKILQKCHGLS. Cysteine 1232 carries the S-farnesyl cysteine lipid modification.

This sequence belongs to the phosphorylase b kinase regulatory chain family. As to quaternary structure, hexadecamer of 4 heterotetramers, each composed of alpha, beta, gamma, and delta subunits. Alpha (PHKA1 or PHKA2) and beta (PHKB) are regulatory subunits, gamma (PHKG1 or PHKG2) is the catalytic subunit, and delta is calmodulin. Although the final Cys may be farnesylated, the terminal tripeptide is probably not removed, and the C-terminus is not methylated. In terms of tissue distribution, predominantly expressed in liver and other non-muscle tissues.

The protein resides in the cell membrane. It participates in glycan biosynthesis; glycogen metabolism. By phosphorylation of various serine residues and by calcium. Phosphorylase b kinase catalyzes the phosphorylation of serine in certain substrates, including troponin I. The alpha chain may bind calmodulin. The chain is Phosphorylase b kinase regulatory subunit alpha, liver isoform (PHKA2) from Oryctolagus cuniculus (Rabbit).